The chain runs to 145 residues: 3-dehydroquinate dehydratase (145 aa).

Catalysis depends on Tyr-23, which acts as the Proton acceptor. Substrate contacts are provided by Asn-74, His-80, and Asp-87. The active-site Proton donor is the His-100. Substrate contacts are provided by residues 101-102 (IS) and Arg-111.

This sequence belongs to the type-II 3-dehydroquinase family. In terms of assembly, homododecamer.

It catalyses the reaction 3-dehydroquinate = 3-dehydroshikimate + H2O. Its pathway is metabolic intermediate biosynthesis; chorismate biosynthesis; chorismate from D-erythrose 4-phosphate and phosphoenolpyruvate: step 3/7. Functionally, catalyzes a trans-dehydration via an enolate intermediate. The polypeptide is 3-dehydroquinate dehydratase (Mycobacterium leprae (strain Br4923)).